The primary structure comprises 374 residues: MRKFPLFSSSLSFLLLILFKENDIIVVMEKKKLRINMLSSSEKVAGQGVSGAYRELVRLLHRAAKDQLIVTENLPIEADVTHFHTIDFPYYLSTFQKKRSGRKIGYVHFLPATLEGSLKIPFFLKGIVKRYVFSFYNRMEHLVVVNPMFIEDLVAAGIPREKVTYIPNFVNKEKWHPLPQEEVVRLRTDLGLSDNQFIVVGAGQVQKRKGIDDFIRLAEELPQITFIWAGGFSFGGMTDGYEHYKTIMENPPKNLIFPGIVSPERMRELYALADLFLLPSYNELFPMTILEAASCEAPIMLRDLDLYKVILEGNYRATAGREEMKEAILEYQANPAVLKDLKEKAKNISREYSEEHLLQIWLDFYEKQAALGRK.

Belongs to the glycosyltransferase group 1 family. Glycosyltransferase 4 subfamily. Requires Mg(2+) as cofactor.

The protein resides in the cell membrane. It catalyses the reaction a 1,2-diacyl-3-O-(alpha-D-glucopyranosyl)-sn-glycerol + UDP-alpha-D-galactose = a 1,2-diacyl-3-O-[alpha-D-galactopyranosyl-(1-&gt;2)-alpha-D-glucopyranosyl]-sn-glycerol + UDP + H(+). With respect to regulation, activated by the negatively charged lipid phosphatidylglycerol (PG). Its function is as follows. Galactosyltransferase involved in the biosynthesis of the bilayer-forming membrane lipid alpha-galactosyl-glucosyldiacylglycerol which is involved in maintaining constant nonbilayer/bilayer conditions (curvature packing stress). Also involved in the beta-lactam resistance. Catalyzes the transfer of a galactosyl residue from UDP-Gal to alpha-glucosyl-DAG (1,2-diacyl-3-O-(alpha-D-glucopyranosyl)-sn-glycerol) acceptor to form the corresponding galactosyl-glycosyl-DAG product (3-O-alpha-(D-galactopyranosyl-alpha-(1-&gt;2)-D-glucopyranosyl)-1,2-diacyl-sn-glycerol). It can only use UDP-Gal as sugar donor and alpha-glucosyl-DAG is the preferred sugar acceptor. This Streptococcus pneumoniae (strain ATCC BAA-255 / R6) protein is Alpha-galactosylglucosyldiacylglycerol synthase (cpoA).